A 61-amino-acid polypeptide reads, in one-letter code: Large ribosomal subunit protein uL30 (61 aa).

Belongs to the universal ribosomal protein uL30 family. Part of the 50S ribosomal subunit.

The polypeptide is Large ribosomal subunit protein uL30 (Treponema denticola (strain ATCC 35405 / DSM 14222 / CIP 103919 / JCM 8153 / KCTC 15104)).